Here is a 611-residue protein sequence, read N- to C-terminus: Leukotriene A-4 hydrolase (611 aa).

K73 carries the N6-acetyllysine modification. Residues 135–137 and 267–272 contribute to the a peptide site; these read QCQ and PYGGME. Residue H296 participates in Zn(2+) binding. Residue E297 is the Proton acceptor of the active site. Zn(2+)-binding residues include H300 and E319. K337 carries the N6-acetyllysine modification. Y384 (proton donor) is an active-site residue. At K414 the chain carries N6-acetyllysine. S416 carries the phosphoserine modification. Residue 564-566 coordinates a peptide; sequence RMK. K573 bears the N6-acetyllysine mark.

This sequence belongs to the peptidase M1 family. In terms of assembly, monomer. Zn(2+) is required as a cofactor. Phosphorylation at Ser-416 inhibits leukotriene-A4 hydrolase activity. Isoform 1 and isoform 2 are expressed in monocytes, lymphocytes, neutrophils, reticulocytes, platelets and fibroblasts.

The protein localises to the cytoplasm. The enzyme catalyses leukotriene A4 + H2O = leukotriene B4. The catalysed reaction is (5S,6S)-epoxy-(18R)-hydroxy-(7E,9E,11Z,14Z,16E)-eicosapentaenoate + H2O = resolvin E1. It catalyses the reaction (5S,6S)-epoxy-(18S)-hydroxy-(7E,9E,11Z,14Z,16E)-eicosapentaenoate + H2O = 18S-resolvin E1. It carries out the reaction Release of the N-terminal residue from a tripeptide.. Its pathway is lipid metabolism; leukotriene B4 biosynthesis. Inhibited by bestatin. The epoxide hydrolase activity is restrained by suicide inactivation that involves binding of LTA4 to Tyr-379. 4-(4-benzylphenyl)thiazol-2-amine (ARM1) selectively inhibits the epoxide hydrolase activity. Bifunctional zinc metalloenzyme that comprises both epoxide hydrolase (EH) and aminopeptidase activities. Acts as an epoxide hydrolase to catalyze the conversion of LTA4 to the pro-inflammatory mediator leukotriene B4 (LTB4). Also has aminopeptidase activity, with high affinity for N-terminal arginines of various synthetic tripeptides. In addition to its pro-inflammatory EH activity, may also counteract inflammation by its aminopeptidase activity, which inactivates by cleavage another neutrophil attractant, the tripeptide Pro-Gly-Pro (PGP), a bioactive fragment of collagen generated by the action of matrix metalloproteinase-9 (MMP9) and prolylendopeptidase (PREPL). Involved also in the biosynthesis of resolvin E1 and 18S-resolvin E1 from eicosapentaenoic acid, two lipid mediators that show potent anti-inflammatory and pro-resolving actions. The protein is Leukotriene A-4 hydrolase (LTA4H) of Homo sapiens (Human).